The primary structure comprises 483 residues: Siroheme synthase (483 aa).

The segment at 1 to 203 is precorrin-2 dehydrogenase /sirohydrochlorin ferrochelatase; that stretch reads MNYFPIFANL…RQNTLAEREL (203 aa). NAD(+)-binding positions include 22-23 and 43-44; these read AV and KH. The residue at position 128 (Ser128) is a Phosphoserine. The segment at 214-483 is uroporphyrinogen-III C-methyltransferase; it reads GFVSLVGAGP…LGTGQEQQAA (270 aa). Residue Pro223 participates in S-adenosyl-L-methionine binding. Residue Asp246 is the Proton acceptor of the active site. The active-site Proton donor is Lys268. S-adenosyl-L-methionine is bound by residues 299–301, Val304, 329–330, Met381, and Gly410; these read GGD and TA.

This sequence in the N-terminal section; belongs to the precorrin-2 dehydrogenase / sirohydrochlorin ferrochelatase family. It in the C-terminal section; belongs to the precorrin methyltransferase family.

It catalyses the reaction uroporphyrinogen III + 2 S-adenosyl-L-methionine = precorrin-2 + 2 S-adenosyl-L-homocysteine + H(+). It carries out the reaction precorrin-2 + NAD(+) = sirohydrochlorin + NADH + 2 H(+). The catalysed reaction is siroheme + 2 H(+) = sirohydrochlorin + Fe(2+). The protein operates within cofactor biosynthesis; adenosylcobalamin biosynthesis; precorrin-2 from uroporphyrinogen III: step 1/1. Its pathway is cofactor biosynthesis; adenosylcobalamin biosynthesis; sirohydrochlorin from precorrin-2: step 1/1. It functions in the pathway porphyrin-containing compound metabolism; siroheme biosynthesis; precorrin-2 from uroporphyrinogen III: step 1/1. It participates in porphyrin-containing compound metabolism; siroheme biosynthesis; siroheme from sirohydrochlorin: step 1/1. The protein operates within porphyrin-containing compound metabolism; siroheme biosynthesis; sirohydrochlorin from precorrin-2: step 1/1. Multifunctional enzyme that catalyzes the SAM-dependent methylations of uroporphyrinogen III at position C-2 and C-7 to form precorrin-2 via precorrin-1. Then it catalyzes the NAD-dependent ring dehydrogenation of precorrin-2 to yield sirohydrochlorin. Finally, it catalyzes the ferrochelation of sirohydrochlorin to yield siroheme. This chain is Siroheme synthase, found in Neisseria meningitidis serogroup C / serotype 2a (strain ATCC 700532 / DSM 15464 / FAM18).